Reading from the N-terminus, the 228-residue chain is Homeobox protein Hox-B6a (228 aa).

The Antp-type hexapeptide motif lies at 132-137; sequence VYPWMQ. The segment at residues 150 to 209 is a DNA-binding region (homeobox); it reads GRRGRQTYTRYQTLELEKEFHFNRYLTRRRRIEIAHALCLTERQIKIWFQNRRMKWKKEN.

The protein belongs to the Antp homeobox family.

The protein resides in the nucleus. Functionally, sequence-specific transcription factor which is part of a developmental regulatory system that provides cells with specific positional identities on the anterior-posterior axis. The polypeptide is Homeobox protein Hox-B6a (hoxb6a) (Danio rerio (Zebrafish)).